Here is a 339-residue protein sequence, read N- to C-terminus: Ketol-acid reductoisomerase (NADP(+)) (339 aa).

In terms of domain architecture, KARI N-terminal Rossmann spans 1–182 (MRVYYDRDAD…GGGRAGIIET (182 aa)). NADP(+) contacts are provided by residues 24–27 (YGSQ), Arg48, Ser51, and 83–86 (DEGQ). His108 is an active-site residue. Gly134 is an NADP(+) binding site. The region spanning 183 to 328 (SFKEEVETDL…EKLRGMMPWI (146 aa)) is the KARI C-terminal knotted domain. Mg(2+)-binding residues include Asp191, Glu195, Glu227, and Glu231. Ser252 is a substrate binding site.

The protein belongs to the ketol-acid reductoisomerase family. Requires Mg(2+) as cofactor.

It catalyses the reaction (2R)-2,3-dihydroxy-3-methylbutanoate + NADP(+) = (2S)-2-acetolactate + NADPH + H(+). It carries out the reaction (2R,3R)-2,3-dihydroxy-3-methylpentanoate + NADP(+) = (S)-2-ethyl-2-hydroxy-3-oxobutanoate + NADPH + H(+). The protein operates within amino-acid biosynthesis; L-isoleucine biosynthesis; L-isoleucine from 2-oxobutanoate: step 2/4. It participates in amino-acid biosynthesis; L-valine biosynthesis; L-valine from pyruvate: step 2/4. Functionally, involved in the biosynthesis of branched-chain amino acids (BCAA). Catalyzes an alkyl-migration followed by a ketol-acid reduction of (S)-2-acetolactate (S2AL) to yield (R)-2,3-dihydroxy-isovalerate. In the isomerase reaction, S2AL is rearranged via a Mg-dependent methyl migration to produce 3-hydroxy-3-methyl-2-ketobutyrate (HMKB). In the reductase reaction, this 2-ketoacid undergoes a metal-dependent reduction by NADPH to yield (R)-2,3-dihydroxy-isovalerate. This chain is Ketol-acid reductoisomerase (NADP(+)), found in Gluconacetobacter diazotrophicus (strain ATCC 49037 / DSM 5601 / CCUG 37298 / CIP 103539 / LMG 7603 / PAl5).